We begin with the raw amino-acid sequence, 348 residues long: Protein RecA (348 aa).

Residue 64–71 (GPESSGKT) participates in ATP binding. Positions 326–335 (EIDGTNKEPL) are enriched in basic and acidic residues. A disordered region spans residues 326–348 (EIDGTNKEPLDENEETLSLLDDE). Residues 336–348 (DENEETLSLLDDE) are compositionally biased toward acidic residues.

Belongs to the RecA family.

The protein resides in the cytoplasm. Functionally, can catalyze the hydrolysis of ATP in the presence of single-stranded DNA, the ATP-dependent uptake of single-stranded DNA by duplex DNA, and the ATP-dependent hybridization of homologous single-stranded DNAs. It interacts with LexA causing its activation and leading to its autocatalytic cleavage. This chain is Protein RecA, found in Listeria innocua serovar 6a (strain ATCC BAA-680 / CLIP 11262).